The chain runs to 324 residues: Acetyl-coenzyme A carboxylase carboxyl transferase subunit alpha (324 aa).

Positions 44–297 (LEERAKQLRY…KAALLRNLAE (254 aa)) constitute a CoA carboxyltransferase C-terminal domain.

It belongs to the AccA family. In terms of assembly, acetyl-CoA carboxylase is a heterohexamer composed of biotin carboxyl carrier protein (AccB), biotin carboxylase (AccC) and two subunits each of ACCase subunit alpha (AccA) and ACCase subunit beta (AccD).

Its subcellular location is the cytoplasm. The enzyme catalyses N(6)-carboxybiotinyl-L-lysyl-[protein] + acetyl-CoA = N(6)-biotinyl-L-lysyl-[protein] + malonyl-CoA. Its pathway is lipid metabolism; malonyl-CoA biosynthesis; malonyl-CoA from acetyl-CoA: step 1/1. In terms of biological role, component of the acetyl coenzyme A carboxylase (ACC) complex. First, biotin carboxylase catalyzes the carboxylation of biotin on its carrier protein (BCCP) and then the CO(2) group is transferred by the carboxyltransferase to acetyl-CoA to form malonyl-CoA. In Thermosynechococcus vestitus (strain NIES-2133 / IAM M-273 / BP-1), this protein is Acetyl-coenzyme A carboxylase carboxyl transferase subunit alpha.